The sequence spans 135 residues: MEQQSDGLKVMVIDDSKTIRRTAETLLKKVGCDVITAIDGFDALAKIADTHPNIIFVDIMMPRLDGYQTCALIKNNSAFKSTPVIMLSSKDGLFDKAKGRIVGSDQYLTKPFSKEELLGAIKAHVPSFTPVDAVS.

Residues 9 to 125 enclose the Response regulatory domain; it reads KVMVIDDSKT…ELLGAIKAHV (117 aa). The residue at position 58 (D58) is a 4-aspartylphosphate.

Phosphorylated.

Functionally, plays an essential role in both cAMP-dependent and independent regulation of twitching motility. Regulates the cAMP-independent coordination of type IV pilus (T4P) biogenesis and retraction that plays a role in surface and host cell adhesion, colonization, biofilm maturation, virulence, and twitching. In addition, phosphorylated PilG is necessary for cAMP production via regulation of the adenylate cyclase CyaB. Acts therefore as a response regulator of the chemosensory system/Chp system. The protein is Protein PilG (pilG) of Pseudomonas aeruginosa (strain ATCC 15692 / DSM 22644 / CIP 104116 / JCM 14847 / LMG 12228 / 1C / PRS 101 / PAO1).